The following is a 410-amino-acid chain: Demethyl-4-deoxygadusol synthase (410 aa).

NAD(+) contacts are provided by residues 56–58 (DAN), 87–90 (EPDK), 119–123 (GLITD), 143–144 (TT), lysine 156, lysine 165, and 183–186 (LLRT). Zn(2+) is bound by residues glutamate 198, histidine 271, and histidine 287.

The protein belongs to the sugar phosphate cyclases superfamily. DDGS family. Homodimer. Requires NAD(+) as cofactor. Co(2+) is required as a cofactor. Zn(2+) serves as cofactor.

It carries out the reaction D-sedoheptulose 7-phosphate = (R)-demethyl-4-deoxygadusol + phosphate + H2O + H(+). In terms of biological role, catalyzes the conversion of sedoheptulose 7-phosphate to demethyl-4-deoxygadusol (DDG). Involved in the synthesis of the mycosporine-like amino acid shinorine, a natural sunscreen compound that protects the cell against UV radiation. The polypeptide is Demethyl-4-deoxygadusol synthase (Trichormus variabilis (strain ATCC 29413 / PCC 7937) (Anabaena variabilis)).